Reading from the N-terminus, the 713-residue chain is Mitochondrial intermediate peptidase (713 aa).

A mitochondrion-targeting transit peptide spans 1–35 (MLCVGRLGGLGARAAALPPRRAGRGILEAGIRARR). The residue at position 126 (Lys126) is an N6-acetyllysine. His495 contributes to the Zn(2+) binding site. Glu496 is a catalytic residue. Zn(2+) is bound by residues His499 and His502.

The protein belongs to the peptidase M3 family. In terms of assembly, monomer. Zn(2+) is required as a cofactor.

The protein localises to the mitochondrion matrix. The catalysed reaction is Release of an N-terminal octapeptide as second stage of processing of some proteins imported into the mitochondrion.. Its activity is regulated as follows. Activity is divalent cation-dependent. It is stimulated by manganese, magnesium or calcium ions and reversibly inhibited by zinc, cobalt and iron. In terms of biological role, cleaves proteins, imported into the mitochondrion, to their mature size. In Pongo abelii (Sumatran orangutan), this protein is Mitochondrial intermediate peptidase (MIPEP).